We begin with the raw amino-acid sequence, 419 residues long: Putative trans-acting enoyl reductase MT2525 (419 aa).

Lys127 is covalently cross-linked (Isoglutamyl lysine isopeptide (Lys-Gln) (interchain with Q-Cter in protein Pup)). The disordered stretch occupies residues 197-232 (NDPDARRQLSDPYMLSPDRGAEPELGPQPDLPSRRG). A helical membrane pass occupies residues 284–304 (VLAPVVSVVGGGVGNAMFGLA).

It belongs to the saccharopine dehydrogenase family. Enoyl reductase subfamily.

It is found in the cell membrane. In Mycobacterium tuberculosis (strain CDC 1551 / Oshkosh), this protein is Putative trans-acting enoyl reductase MT2525.